The primary structure comprises 406 residues: Argininosuccinate synthase (406 aa).

Residues 13–21 and alanine 40 contribute to the ATP site; that span reads AYSGGLDTS. Tyrosine 91 and serine 96 together coordinate L-citrulline. Position 121 (glycine 121) interacts with ATP. Residues threonine 123, asparagine 127, and aspartate 128 each contribute to the L-aspartate site. Residue asparagine 127 coordinates L-citrulline. L-citrulline-binding residues include arginine 131, serine 182, serine 191, glutamate 267, and tyrosine 279.

It belongs to the argininosuccinate synthase family. Type 1 subfamily. In terms of assembly, homotetramer.

It is found in the cytoplasm. It catalyses the reaction L-citrulline + L-aspartate + ATP = 2-(N(omega)-L-arginino)succinate + AMP + diphosphate + H(+). The protein operates within amino-acid biosynthesis; L-arginine biosynthesis; L-arginine from L-ornithine and carbamoyl phosphate: step 2/3. This is Argininosuccinate synthase from Brucella abortus (strain S19).